The primary structure comprises 554 residues: Protein translocase subunit SecD (554 aa).

6 helical membrane passes run L10 to A30, A392 to Y412, L414 to M434, G435 to T455, A491 to A511, and G516 to V536.

It belongs to the SecD/SecF family. SecD subfamily. As to quaternary structure, forms a complex with SecF. Part of the essential Sec protein translocation apparatus which comprises SecA, SecYEG and auxiliary proteins SecDF-YajC and YidC.

It is found in the cell inner membrane. In terms of biological role, part of the Sec protein translocase complex. Interacts with the SecYEG preprotein conducting channel. SecDF uses the proton motive force (PMF) to complete protein translocation after the ATP-dependent function of SecA. In Rhodobacter capsulatus (strain ATCC BAA-309 / NBRC 16581 / SB1003), this protein is Protein translocase subunit SecD.